A 406-amino-acid chain; its full sequence is Probable endo-xylogalacturonan hydrolase A (406 aa).

Positions 1–18 are cleaved as a signal peptide; it reads MLYYRNLALLSLLSLSSA. 4 PbH1 repeats span residues 183-213, 214-235, 237-257, and 299-320; these read AKDV…DIGS, STHV…ALKP, CNYV…SVGS, and VKNV…QIQS. The active-site Proton donor is the Asp228. N-linked (GlcNAc...) asparagine glycosylation is present at Asn244. His251 is an active-site residue. An N-linked (GlcNAc...) asparagine glycan is attached at Asn301.

The protein belongs to the glycosyl hydrolase 28 family.

The protein localises to the secreted. In terms of biological role, pectinolytic enzyme involved in the degradation of xylogalacturonan (xga), a galacturonan backbone heavily substituted with xylose, and which is one important component of the hairy regions of pectin. Activity requires a galacturonic acid backbone substituted with xylose. The sequence is that of Probable endo-xylogalacturonan hydrolase A (xghA) from Neosartorya fischeri (strain ATCC 1020 / DSM 3700 / CBS 544.65 / FGSC A1164 / JCM 1740 / NRRL 181 / WB 181) (Aspergillus fischerianus).